We begin with the raw amino-acid sequence, 299 residues long: tRNA dimethylallyltransferase 2 (299 aa).

9–16 is an ATP binding site; sequence GPTGVGKT. Residue 11–16 participates in substrate binding; sequence TGVGKT. An interaction with substrate tRNA region spans residues 34 to 37; it reads DSRQ.

It belongs to the IPP transferase family. In terms of assembly, monomer. Mg(2+) serves as cofactor.

The catalysed reaction is adenosine(37) in tRNA + dimethylallyl diphosphate = N(6)-dimethylallyladenosine(37) in tRNA + diphosphate. Catalyzes the transfer of a dimethylallyl group onto the adenine at position 37 in tRNAs that read codons beginning with uridine, leading to the formation of N6-(dimethylallyl)adenosine (i(6)A). In Parabacteroides distasonis (strain ATCC 8503 / DSM 20701 / CIP 104284 / JCM 5825 / NCTC 11152), this protein is tRNA dimethylallyltransferase 2.